Reading from the N-terminus, the 202-residue chain is Putative pituitary tumor-transforming gene 3 protein (202 aa).

Positions 61-64 match the D-box motif; the sequence is RKAL. The SH3-binding motif lies at 163–173; that stretch reads PPSPLKMPSPP.

It belongs to the securin family.

The protein resides in the cytoplasm. It is found in the nucleus. This is Putative pituitary tumor-transforming gene 3 protein (PTTG3) from Pan troglodytes (Chimpanzee).